Here is a 243-residue protein sequence, read N- to C-terminus: MGWFKYMYKRILLKLSGEGLANKEKNLAIDYKLVEDIAKQLKEVVKKGIEVAIVVGGGNFWRGTSAEKNGIPRNRADYIGMLATVMNGLALKSGFEKEGLVARVYSSLNLDPKVAENYINEKATKNLENNEIVIFAGGTGRPYFTTDTAATLFASEIGADAIIMGKNGVNGVYSDDPKKNKDAKKFDTITYDEVLNMNLQIMDLTAISMAKENKIELIVFDITEKNSIYNSILGKINHTKVVN.

14-17 (KLSG) lines the ATP pocket. Position 57 (glycine 57) interacts with UMP. Residues glycine 58 and arginine 62 each coordinate ATP. Residues aspartate 77 and 139 to 146 (TGRPYFTT) contribute to the UMP site. ATP is bound by residues asparagine 167, tyrosine 173, and aspartate 176.

The protein belongs to the UMP kinase family. In terms of assembly, homohexamer.

Its subcellular location is the cytoplasm. The enzyme catalyses UMP + ATP = UDP + ADP. It participates in pyrimidine metabolism; CTP biosynthesis via de novo pathway; UDP from UMP (UMPK route): step 1/1. Its activity is regulated as follows. Inhibited by UTP. In terms of biological role, catalyzes the reversible phosphorylation of UMP to UDP. This chain is Uridylate kinase, found in Mycoplasmopsis pulmonis (strain UAB CTIP) (Mycoplasma pulmonis).